We begin with the raw amino-acid sequence, 354 residues long: UDP-N-acetylglucosamine--N-acetylmuramyl-(pentapeptide) pyrophosphoryl-undecaprenol N-acetylglucosamine transferase (354 aa).

UDP-N-acetyl-alpha-D-glucosamine is bound by residues 13–15, Asn-125, Ser-189, Ile-242, 261–266, and Gln-286; these read SGG and ALTVSE.

Belongs to the glycosyltransferase 28 family. MurG subfamily.

The protein localises to the cell inner membrane. The catalysed reaction is di-trans,octa-cis-undecaprenyl diphospho-N-acetyl-alpha-D-muramoyl-L-alanyl-D-glutamyl-meso-2,6-diaminopimeloyl-D-alanyl-D-alanine + UDP-N-acetyl-alpha-D-glucosamine = di-trans,octa-cis-undecaprenyl diphospho-[N-acetyl-alpha-D-glucosaminyl-(1-&gt;4)]-N-acetyl-alpha-D-muramoyl-L-alanyl-D-glutamyl-meso-2,6-diaminopimeloyl-D-alanyl-D-alanine + UDP + H(+). It functions in the pathway cell wall biogenesis; peptidoglycan biosynthesis. In terms of biological role, cell wall formation. Catalyzes the transfer of a GlcNAc subunit on undecaprenyl-pyrophosphoryl-MurNAc-pentapeptide (lipid intermediate I) to form undecaprenyl-pyrophosphoryl-MurNAc-(pentapeptide)GlcNAc (lipid intermediate II). This chain is UDP-N-acetylglucosamine--N-acetylmuramyl-(pentapeptide) pyrophosphoryl-undecaprenol N-acetylglucosamine transferase, found in Buchnera aphidicola subsp. Acyrthosiphon pisum (strain APS) (Acyrthosiphon pisum symbiotic bacterium).